The chain runs to 196 residues: Imidazoleglycerol-phosphate dehydratase (196 aa).

It belongs to the imidazoleglycerol-phosphate dehydratase family.

The protein resides in the cytoplasm. It carries out the reaction D-erythro-1-(imidazol-4-yl)glycerol 3-phosphate = 3-(imidazol-4-yl)-2-oxopropyl phosphate + H2O. Its pathway is amino-acid biosynthesis; L-histidine biosynthesis; L-histidine from 5-phospho-alpha-D-ribose 1-diphosphate: step 6/9. The protein is Imidazoleglycerol-phosphate dehydratase of Moorella thermoacetica (strain ATCC 39073 / JCM 9320).